A 250-amino-acid polypeptide reads, in one-letter code: Phosphoribosylaminoimidazole-succinocarboxamide synthase (250 aa).

Belongs to the SAICAR synthetase family.

It catalyses the reaction 5-amino-1-(5-phospho-D-ribosyl)imidazole-4-carboxylate + L-aspartate + ATP = (2S)-2-[5-amino-1-(5-phospho-beta-D-ribosyl)imidazole-4-carboxamido]succinate + ADP + phosphate + 2 H(+). It functions in the pathway purine metabolism; IMP biosynthesis via de novo pathway; 5-amino-1-(5-phospho-D-ribosyl)imidazole-4-carboxamide from 5-amino-1-(5-phospho-D-ribosyl)imidazole-4-carboxylate: step 1/2. The chain is Phosphoribosylaminoimidazole-succinocarboxamide synthase from Chloroflexus aggregans (strain MD-66 / DSM 9485).